The chain runs to 120 residues: UPF0231 protein YacL (120 aa).

Belongs to the UPF0231 family.

The polypeptide is UPF0231 protein YacL (Escherichia coli O6:K15:H31 (strain 536 / UPEC)).